Consider the following 920-residue polypeptide: DNA ligase (920 aa).

Residues 90 to 94 (DAAYD), 139 to 140 (SL), and E173 each bind NAD(+). Catalysis depends on K175, which acts as the N6-AMP-lysine intermediate. NAD(+) is bound by residues R196, E235, K360, and K384. 4 residues coordinate Zn(2+): C481, C484, C500, and C506. The segment at 659–691 (RAQGEAAIESAETQGDTASETTGAPTGAEAPLG) is disordered. A compositionally biased stretch (polar residues) spans 669–682 (AETQGDTASETTGA). One can recognise a BRCT domain in the interval 839–920 (SLPQTLAGKT…FAQLLATGTI (82 aa)).

This sequence belongs to the NAD-dependent DNA ligase family. LigA subfamily. The cofactor is Mg(2+). Requires Mn(2+) as cofactor.

The enzyme catalyses NAD(+) + (deoxyribonucleotide)n-3'-hydroxyl + 5'-phospho-(deoxyribonucleotide)m = (deoxyribonucleotide)n+m + AMP + beta-nicotinamide D-nucleotide.. Its function is as follows. DNA ligase that catalyzes the formation of phosphodiester linkages between 5'-phosphoryl and 3'-hydroxyl groups in double-stranded DNA using NAD as a coenzyme and as the energy source for the reaction. It is essential for DNA replication and repair of damaged DNA. The polypeptide is DNA ligase (Bifidobacterium longum (strain NCC 2705)).